The primary structure comprises 749 residues: Cytosolic phospholipase A2 (749 aa).

The phospholipid binding stretch occupies residues 1-178 (MSFIDPYQHI…MKKLLGPKNS (178 aa)). Position 2 is a phosphoserine (S2). One can recognise a C2 domain in the interval 6–122 (PYQHIIVEHQ…KVGEKKEVPF (117 aa)). Residues D40, T41, D43, N65, D93, A94, and N95 each coordinate Ca(2+). The PLA2c domain occupies 140–740 (SCPDLRFSMA…SNVEARRFFN (601 aa)). S228 (nucleophile) is an active-site residue. T268 carries the post-translational modification Phosphothreonine. The disordered stretch occupies residues 409-457 (GSQSRGSTMEEELENITTKHIVSNDSSDSDDESHEPKGTENEDAGSDYQ). Phosphoserine occurs at positions 434, 435, and 437. Residue S505 is modified to Phosphoserine; by MAPK. A Phosphoserine modification is found at S515. A Glycyl lysine isopeptide (Lys-Gly) (interchain with G-Cter in SUMO2) cross-link involves residue K541. The Proton acceptor role is filled by D549. K606 is covalently cross-linked (Glycyl lysine isopeptide (Lys-Gly) (interchain with G-Cter in SUMO2)). 2 positions are modified to phosphoserine: S727 and S729.

As to quaternary structure, interacts with KAT5. Phosphorylated at both Ser-505 and Ser-727 in response to mitogenic stimuli.

It is found in the cytoplasm. It localises to the golgi apparatus membrane. The protein localises to the nucleus envelope. It carries out the reaction a 1,2-diacyl-sn-glycero-3-phosphocholine + H2O = a 1-acyl-sn-glycero-3-phosphocholine + a fatty acid + H(+). The enzyme catalyses a 1-O-alkyl-2-acyl-sn-glycero-3-phosphocholine + H2O = a 1-O-alkyl-sn-glycero-3-phosphocholine + a fatty acid + H(+). It catalyses the reaction a 1-acyl-sn-glycero-3-phosphocholine + H2O = sn-glycerol 3-phosphocholine + a fatty acid + H(+). The catalysed reaction is 1-hexadecanoyl-2-(5Z,8Z,11Z,14Z-eicosatetraenoyl)-sn-glycero-3-phosphocholine + H2O = 1-hexadecanoyl-sn-glycero-3-phosphocholine + (5Z,8Z,11Z,14Z)-eicosatetraenoate + H(+). It carries out the reaction 1,2-di-(5Z,8Z,11Z,14Z-eicosatetraenoyl)-sn-glycero-3-phosphocholine + H2O = 1-(5Z,8Z,11Z,14Z-eicosatetraenoyl)-sn-glycero-3-phosphocholine + (5Z,8Z,11Z,14Z)-eicosatetraenoate + H(+). The enzyme catalyses 1-octadecanoyl-2-(5Z,8Z,11Z,14Z-eicosatetraenoyl)-sn-glycero-3-phosphocholine + H2O = 1-octadecanoyl-sn-glycero-3-phosphocholine + (5Z,8Z,11Z,14Z)-eicosatetraenoate + H(+). It catalyses the reaction 1-hexadecanoyl-2-(9Z,12Z-octadecadienoyl)-sn-glycero-3-phosphocholine + H2O = (9Z,12Z)-octadecadienoate + 1-hexadecanoyl-sn-glycero-3-phosphocholine + H(+). The catalysed reaction is 1-octadecanoyl-2-(9Z,12Z,15Z-octadecatrienoyl)-sn-glycero-3-phosphocholine + H2O = (9Z,12Z,15Z)-octadecatrienoate + 1-octadecanoyl-sn-glycero-3-phosphocholine + H(+). It carries out the reaction 1-(5Z,8Z,11Z,14Z-eicosatetraenoyl)-2-hexadecanoyl-sn-glycero-3-phosphocholine + H2O = 1-(5Z,8Z,11Z,14Z-eicosatetraenoyl)-sn-glycero-3-phosphocholine + hexadecanoate + H(+). The enzyme catalyses 1-O-hexadecyl-2-(5Z,8Z,11Z,14Z)-eicosatetraenoyl-sn-glycero-3-phosphocholine + H2O = 1-O-hexadecyl-sn-glycero-3-phosphocholine + (5Z,8Z,11Z,14Z)-eicosatetraenoate + H(+). It catalyses the reaction 1,2-di-(9Z-octadecenoyl)-sn-glycero-3-phospho-(1'-sn-glycerol) + H2O = 1-(9Z-octadecenoyl)-sn-glycero-3-phospho-(1'-sn-glycerol) + (9Z)-octadecenoate + H(+). The catalysed reaction is 1-octadecanoyl-2-(5Z,8Z,11Z,14Z-eicosatetraenoyl)-sn-glycero-3-phosphate + H2O = 1-octadecanoyl-sn-glycero-3-phosphate + (5Z,8Z,11Z,14Z)-eicosatetraenoate + H(+). It carries out the reaction 1-hexadecanoyl-sn-glycero-3-phosphocholine + H2O = sn-glycerol 3-phosphocholine + hexadecanoate + H(+). The enzyme catalyses 2-(prostaglandin E2)-sn-glycero-3-phosphoethanolamine + H2O = sn-glycero-3-phosphoethanolamine + prostaglandin E2 + H(+). It catalyses the reaction 2-[(15S)-hydroxy-(5Z,8Z,11Z,13E)-eicosatetraenoyl]-sn-glycero-3-phosphocholine + H2O = (15S)-hydroxy-(5Z,8Z,11Z,13E)-eicosatetraenoate + sn-glycerol 3-phosphocholine + H(+). The catalysed reaction is 2-[(15R)-hydroxy-(5Z,8Z,11Z,13E)-eicosatetraenoyl]-sn-glycero-3-phosphocholine + H2O = (15R)-hydroxy-(5Z,8Z,11Z,13E)-eicosatetraenoate + sn-glycerol 3-phosphocholine + H(+). It carries out the reaction 2-(prostaglandin E2)-sn-glycero-3-phosphocholine + H2O = prostaglandin E2 + sn-glycerol 3-phosphocholine + H(+). The enzyme catalyses 2-[(11R)-hydroxy-(5Z,8Z,12E,14Z)-eicosatetraenoyl]-sn-glycero-3-phosphocholine + H2O = (11R)-hydroxy-(5Z,8Z,12E,14Z)-eicosatetraenoate + sn-glycerol 3-phosphocholine + H(+). It catalyses the reaction 1-(5Z,8Z,11Z,14Z-eicosatetraenoyl)-2-O-hexadecyl-sn-glycero-3-phosphocholine + H2O = 2-O-hexadecyl-sn-glycero-3-phosphocholine + (5Z,8Z,11Z,14Z)-eicosatetraenoate + H(+). The catalysed reaction is 1-octadecanoyl-2-(5Z,8Z,11Z,14Z-eicosatetraenoyl)-sn-glycero-3-phosphocholine + glycerol = 1-(5Z,8Z,11Z,14Z-eicosatetraenoyl)-glycerol + 1-octadecanoyl-sn-glycero-3-phosphocholine. It carries out the reaction 1-octadecanoyl-2-(9Z,12Z,15Z-octadecatrienoyl)-sn-glycero-3-phosphocholine + glycerol = 1-(9Z,12Z,15Z-octadecatrienoyl)-glycerol + 1-octadecanoyl-sn-glycero-3-phosphocholine. The protein operates within membrane lipid metabolism; glycerophospholipid metabolism. It functions in the pathway lipid metabolism; arachidonate metabolism. Its pathway is lipid metabolism; prostaglandin biosynthesis. It participates in lipid metabolism; leukotriene B4 biosynthesis. With respect to regulation, activated by cytosolic calcium, which is necessary for binding to membrane lipids. Activated by phosphorylation in response to mitogenic stimuli. Has primarily calcium-dependent phospholipase and lysophospholipase activities, with a major role in membrane lipid remodeling and biosynthesis of lipid mediators of the inflammatory response. Plays an important role in embryo implantation and parturition through its ability to trigger prostanoid production. Preferentially hydrolyzes the ester bond of the fatty acyl group attached at sn-2 position of phospholipids (phospholipase A2 activity). Selectively hydrolyzes sn-2 arachidonoyl group from membrane phospholipids, providing the precursor for eicosanoid biosynthesis via the cyclooxygenase pathway. In an alternative pathway of eicosanoid biosynthesis, hydrolyzes sn-2 fatty acyl chain of eicosanoid lysophopholipids to release free bioactive eicosanoids. Hydrolyzes the ester bond of the fatty acyl group attached at sn-1 position of phospholipids (phospholipase A1 activity) only if an ether linkage rather than an ester linkage is present at the sn-2 position. This hydrolysis is not stereospecific. Has calcium-independent phospholipase A2 and lysophospholipase activities in the presence of phosphoinositides. Has O-acyltransferase activity. Catalyzes the transfer of fatty acyl chains from phospholipids to a primary hydroxyl group of glycerol (sn-1 or sn-3), potentially contributing to monoacylglycerol synthesis. The protein is Cytosolic phospholipase A2 (PLA2G4A) of Pongo abelii (Sumatran orangutan).